We begin with the raw amino-acid sequence, 1679 residues long: MAQQQQQQLQQQQQHHTSSINNNNNSILLLQQQQPQQQQQLDQLQQYNNNLYSQNYNMEEYERRKRREREKIERQQGIQIDDRETSLFGEPRRVTEGDAEITAALGEFFEARVYINNQTVGISRSAPGAGNPRLQPNMPPQGKSLGHSPSSASASAAAGPTSASATTALPGQQQQHYQQQQRPPTYVKQADNKPPYNGRGGYPGQPMKNDIPSSSGMAPPRGPPRSSSSNSNSSSATNNASSGGVPASTPLGPPLSTQMPNGREKSFLGPPAPALHNGTGGRFVPPAASKRPGVGQQPPPPEKDVNKIISDIANIFTVQPLTLIAATPHAPTRENYNLLAPNKQKYAMDIPSSPPSAEPSSLMTPLFAPIASPIAPLVTTPPQASQLPLGGATSGTILAGEALAPLHQLPPTPPKAASGVTSPGPGKPLKTEKNHSLEKQDSCLENDLELSESEDEQRKKEGRSAGNSSNSSESDSSESGSESSSKNDPQHHPNHQQHHHQLQQQQQQQQQQASMQQQQVLQQQQQHRPQPLTSNGAQNKKFRHEIIARGSNTITGLLSSSGFGSGGSVGPAGLNSSAAMGAGSGSGGTLSSGGSSSNKTPSPTESNKWNLSRFFHKPANQTNSENVSPGNVSMKVPGILPGGAQIIPESIDVTTAIVKNEKIHDDHMAMEDGEEEDDDEEQQLRYGGGLSVTPVAVKKEAIDAVSEMALGAIPKTQIKRESAEALLSARLSDSGTSASGSSSSSSSSSDSAVGGEVVPKLGLGEILQLPGVPAAITTVMRVQPTQSQKAPPSNSVTLTPILPLPTSPKQRQKKPRKKKAVTSAPILDSSDDDEPPPKHPGLDHTAVSVQTPPAADTVKKGRGRPRKQQQSGGSGNLSSASAGSSSQTKGPTLTAAKKPLAKTPLAMSRARKREHSSQSSSNGNTPTKKVATPQLVAAPLKPTSVTAGSSSSDEDSSSSAESSSKSSSSSSSSDDTETQNTNCRIVKLNKTGAVQKKALLGSGSSSPSSSGSEPEDQTTRSQVGSGQALAQQLPPYKQLPISQHSQHLSSSECSSSSGGCTAVCSSSSGEEDEGRREKERERKPKSDKNKISTLTRIFNPKEGGAKKQGQVVIVDLQEEQQQGKLDAAAQPPPPQAPPAAPAAIMAKPRMTPTQQQQLGAGLASPARTTTPHLTSLICKIDLSKLSRERIMRLKKLTPAQQNGHLTPKDQATNAVHVPNGYAGDTNPATKVKHEHPVKPEPELDAGYEAKFKPGNVKQEFQLKQERDRDRERERERERERDREREQPPGRRRKRSSSSSSSPYKEKKRKKEKADQLQIGKELLPVPVLLPSNNHERMPNHDRLSYDKLQLLHEDAAAVIGDVSAANGSPTKKMMVMSPLPPPPTVTVAPATCNEAVQTTPPSATTASATAPPVPATRLIYRSYFDRDVEHPSDDPRKNNQFLQEAISRKHAADLERDSFNQVTLYLEAVVYFLLTADAMERCSSEQATNTMYKDTLSLIKFISTKFRPYQQQSTTNIQHETHNKVAILSLRCQSLISLKLYKLRRKDCRAVINSLADFFRVGRGDIANGNTPSSISPSNSVGSQGSGSNTPPGRIVPPDIHNMLCKENEFLSYLNSAHELWDQADRLVRTGNHIDFIRELDHENGPLTLHSTMHEVFRYVQAGLKTLRDAVSHPTHQSQ.

Disordered regions lie at residues methionine 1–asparagine 21, asparagine 55–isoleucine 78, arginine 124–valine 305, leucine 406–asparagine 539, methionine 580–tryptophan 609, aspartate 733–glycine 755, glutamine 783–histidine 1172, and threonine 1197–glycine 1319. Residues arginine 69 to isoleucine 78 are compositionally biased toward basic and acidic residues. Low complexity-rich tracts occupy residues serine 144–glutamine 181 and proline 212–glycine 244. Threonine 421 is modified (phosphothreonine). Positions leucine 429–serine 442 are enriched in basic and acidic residues. Positions leucine 444–aspartate 455 are enriched in acidic residues. 2 positions are modified to phosphoserine: serine 451 and serine 453. The span at serine 464–serine 484 shows a compositional bias: low complexity. Basic residues predominate over residues histidine 492–glutamine 501. Low complexity predominate over residues leucine 502–leucine 532. Over residues alanine 582–serine 591 the composition is skewed to gly residues. Polar residues predominate over residues asparagine 598–tryptophan 609. The segment covering aspartate 733–alanine 752 has biased composition (low complexity). Over residues glutamine 783 to valine 796 the composition is skewed to polar residues. The span at glutamine 810–alanine 820 shows a compositional bias: basic residues. Residues serine 829 and serine 830 each carry the phosphoserine modification. The segment at residues lysine 859–serine 871 is a DNA-binding region (a.T hook). Residues glutamine 868 to alanine 906 show a composition bias toward low complexity. Phosphoserine is present on residues serine 879 and serine 881. Positions serine 917–threonine 927 are enriched in polar residues. Low complexity-rich tracts occupy residues serine 957–serine 973 and glycine 1001–serine 1012. Residues threonine 1019–alanine 1030 show a composition bias toward polar residues. The segment covering serine 1042–serine 1068 has biased composition (low complexity). Positions glutamate 1073–lysine 1090 are enriched in basic and acidic residues. Over residues glutamine 1130–alanine 1140 the composition is skewed to pro residues. Positions proline 1198–asparagine 1213 are enriched in polar residues. 2 stretches are compositionally biased toward basic and acidic residues: residues glutamate 1234–phenylalanine 1251 and phenylalanine 1260–proline 1288. Serine 1368 carries the post-translational modification Phosphoserine. Residue threonine 1370 is modified to Phosphothreonine. Residues glycine 1569–asparagine 1589 are compositionally biased toward low complexity. A disordered region spans residues glycine 1569 to arginine 1594.

This sequence belongs to the AF4 family.

Its subcellular location is the nucleus. Its function is as follows. Has a role in transcriptional regulation. Acts in parallel with the Ras/MAPK and the PI3K/PKB pathways in the control of cell identity and cellular growth. Essential for regulation of the cytoskeleton and cell growth but not for cell proliferation or growth rate. Required specifically for the microtubule-based basal transport of lipid droplets. Plays a partially redundant function downstream of Raf in cell fate specification in the developing eye. Pair-rule protein that regulates embryonic cellularization, gastrulation and segmentation. In Drosophila erecta (Fruit fly), this protein is AF4/FMR2 family member lilli.